Consider the following 698-residue polypeptide: tRNA (guanine(37)-N(1))-methyltransferase (698 aa).

Positions 233 to 254 are disordered; that stretch reads DSTAHDSVQRNEGKTPKGPLDG. A compositionally biased stretch (basic and acidic residues) spans 234–247; it reads STAHDSVQRNEGKT. S-adenosyl-L-methionine-binding positions include arginine 394, 432 to 433, and 459 to 460; these read DI and DA. Disordered regions lie at residues 500 to 522 and 534 to 582; these read PDQN…GHVD and KKKL…DAPR. 3 stretches are compositionally biased toward basic and acidic residues: residues 513–522, 539–550, and 569–582; these read RESDRVGHVD, HADTNDPLEERP, and TNND…DAPR. Asparagine 603 contacts S-adenosyl-L-methionine.

The protein belongs to the class I-like SAM-binding methyltransferase superfamily. TRM5/TYW2 family. As to quaternary structure, monomer.

It is found in the mitochondrion matrix. The protein localises to the nucleus. It localises to the cytoplasm. The catalysed reaction is guanosine(37) in tRNA + S-adenosyl-L-methionine = N(1)-methylguanosine(37) in tRNA + S-adenosyl-L-homocysteine + H(+). Functionally, specifically methylates the N1 position of guanosine-37 in various cytoplasmic and mitochondrial tRNAs. Methylation is not dependent on the nature of the nucleoside 5' of the target nucleoside. This is the first step in the biosynthesis of wybutosine (yW), a modified base adjacent to the anticodon of tRNAs and required for accurate decoding. This is tRNA (guanine(37)-N(1))-methyltransferase from Plasmodium knowlesi (strain H).